Reading from the N-terminus, the 941-residue chain is Cell wall protein IFF9 (941 aa).

Residues 1 to 20 (MQLFQNILVSIALLTQIVFA) form the signal peptide. A lipid anchor (GPI-anchor amidated asparagine) is attached at Asn-917. A propeptide spans 918-941 (GSNKESIENIKYLALVVFGLMMFM) (removed in mature form).

Belongs to the HYR1/IFF family. Post-translationally, the GPI-anchor is attached to the protein in the endoplasmic reticulum and serves to target the protein to the cell surface. There, the glucosamine-inositol phospholipid moiety is cleaved off and the GPI-modified mannoprotein is covalently attached via its lipidless GPI glycan remnant to the 1,6-beta-glucan of the outer cell wall layer.

It is found in the secreted. The protein resides in the cell wall. It localises to the membrane. In terms of biological role, GPI-anchored cell wall protein involved in cell wall organization, hyphal growth, as well as in host-fungal interaction and virulence. This chain is Cell wall protein IFF9 (IFF9), found in Candida albicans (strain SC5314 / ATCC MYA-2876) (Yeast).